A 389-amino-acid polypeptide reads, in one-letter code: Radial spoke head protein 3 homolog B (389 aa).

A disordered region spans residues 63–106; it reads PTGQVPGQPDPLELQRQQQARRRALARKRAQEQLKPRTPEPVEG. A compositionally biased stretch (basic residues) spans 81–90; that stretch reads QARRRALARK. The segment covering 91-106 has biased composition (basic and acidic residues); that stretch reads RAQEQLKPRTPEPVEG. The residue at position 143 (Thr143) is a Phosphothreonine; by MAPK1. A coiled-coil region spans residues 206–242; that stretch reads YEEIRNVELAEVQRLEEQERRHREEKERRKKQQWEIV. Residues 332–389 form a disordered region; that stretch reads EAMPPGQKTNVINGPNTVTDPSVTTLHTQKPVLDRVSSQPAPSQERKPVEEGGHLMAE. Residues 338–359 show a composition bias toward polar residues; that stretch reads QKTNVINGPNTVTDPSVTTLHT. The segment covering 375–389 has biased composition (basic and acidic residues); it reads QERKPVEEGGHLMAE.

The protein belongs to the flagellar radial spoke RSP3 family. Component of the axonemal radial spoke 1 (RS1) and 2 (RS2) complexes, at least composed of spoke head proteins RSPH1, RSPH3B, RSPH9 and the cilia-specific component RSPH4A or sperm-specific component RSPH6A, spoke stalk proteins RSPH14, DNAJB13, DYDC1, ROPN1L and NME5, and the RS1 complex-specific anchor protein IQUB. Interacts with IQUB. Interacts with phosphorylated MAPK1. Interacts with MEK1. Interacts with PKA regulatory subunits PRKAR1A and PRKAR1B. Interacts with RSPH1. Interacts with RSPH4A. Interacts with RSPH6A. Interacts with RSPH9. Interacts with LRRC23. As to expression, expressed in ependymal cells (at protein level).

Its subcellular location is the cytoplasm. It is found in the cytoskeleton. It localises to the cilium axoneme. The protein resides in the flagellum axoneme. In terms of biological role, functions as part of axonemal radial spoke complexes that play an important part in the motility of sperm and cilia. Functions as a protein kinase A-anchoring protein that scaffolds the cAMP-dependent protein kinase holoenzyme. May serve as a point of convergence for MAPK and PKA signaling in cilia. The chain is Radial spoke head protein 3 homolog B (Rsph3b) from Mus musculus (Mouse).